The primary structure comprises 336 residues: Probable ADP-ribosylation factor GTPase-activating protein AGD13 (336 aa).

The region spanning 15–137 (KRRIRDLLNQ…EFLKPSLRIT (123 aa)) is the Arf-GAP domain. A C4-type zinc finger spans residues 30-53 (CADCGASDPKWASANIGVFICLKC). The C2 domain maps to 162–280 (RTNSSSQTMF…AMAFGDPEMF (119 aa)). Residues aspartate 249, serine 252, and aspartate 255 each coordinate Ca(2+).

It depends on Ca(2+) as a cofactor.

In terms of biological role, GTPase-activating protein (GAP) for ADP ribosylation factor (ARF). In Arabidopsis thaliana (Mouse-ear cress), this protein is Probable ADP-ribosylation factor GTPase-activating protein AGD13 (AGD13).